Consider the following 340-residue polypeptide: Methionine import ATP-binding protein MetN (340 aa).

The 239-residue stretch at 5–243 (IEFRGVTKSF…PQTTTARRFV (239 aa)) folds into the ABC transporter domain. 40-47 (GYSGAGKS) contributes to the ATP binding site.

Belongs to the ABC transporter superfamily. Methionine importer (TC 3.A.1.24) family. In terms of assembly, the complex is composed of two ATP-binding proteins (MetN), two transmembrane proteins (MetI) and a solute-binding protein (MetQ).

The protein resides in the cell membrane. It carries out the reaction L-methionine(out) + ATP + H2O = L-methionine(in) + ADP + phosphate + H(+). It catalyses the reaction D-methionine(out) + ATP + H2O = D-methionine(in) + ADP + phosphate + H(+). Part of the ABC transporter complex MetNIQ involved in methionine import. Responsible for energy coupling to the transport system. The polypeptide is Methionine import ATP-binding protein MetN (Leifsonia xyli subsp. xyli (strain CTCB07)).